A 557-amino-acid chain; its full sequence is MGRTLTSVLVVFISMAGWLGGADTGSISGILGMRDFQSRFADRYNPITNSYSYSAWRQALLTGTVNAGCLFGAMLSSPFTEAIGKKYSIAFFSGCYIIGQILLVTAVPSWVQIMVGKLFTGLTIGALSVLSPGYQSEVAPPQIRGAVVSTYQLFQTCGTLIAACINMGTHKLRKTASWRTSFGINILWGIFLMVGVLFLPESPRYLIYKGRDEEALRIMCQTAELDPESEIIQTNFNTIKSDIEMEMAGGKARWPEVFGKEVRYRTVLGFLTMLLRELIGNNYYFYYATQVFKGTGMTDIFLPAVILGAINFGTTFGALYTIDNLGRRNPLIFGAAFQSICFFIYAAVGDRKLIYKNGTSDHRAGAVMIVFSCLFLFSYCCSWGPMGWVIVGETFPIRYRSKCAAVATSGNWLGNFMVSFFTPFISNSIGFKLGYIYACINMTSAFQIFLMAKETKGLTLEEVNELYESDIKPWDSYKYVRQIESRRIHFSKEEEKREREKSKGYRGQEERFIENADGADNDDSSASSESFASAGAHSRSVFPRRSNVSEESHPTWV.

The Cytoplasmic segment spans residues Met1–Leu9. A helical transmembrane segment spans residues Val10–Ile30. Residues Leu31–Gln58 lie on the Extracellular side of the membrane. The chain crosses the membrane as a helical span at residues Ala59–Phe79. The Cytoplasmic portion of the chain corresponds to Thr80 to Tyr87. A helical membrane pass occupies residues Ser88–Pro108. Topologically, residues Ser109 to Gln112 are extracellular. Residues Ile113–Gly133 form a helical membrane-spanning segment. Residues Tyr134–Arg144 are Cytoplasmic-facing. Residues Gly145–Ile165 form a helical membrane-spanning segment. At Asn166 to Arg179 the chain is on the extracellular side. Residues Thr180–Pro200 traverse the membrane as a helical segment. Residues Glu201–Thr266 lie on the Cytoplasmic side of the membrane. The chain crosses the membrane as a helical span at residues Val267–Phe285. Over Tyr286–Phe301 the chain is Extracellular. Residues Leu302–Ile322 traverse the membrane as a helical segment. The Cytoplasmic segment spans residues Asp323–Arg328. Residues Asn329–Gly349 form a helical membrane-spanning segment. The Extracellular portion of the chain corresponds to Asp350–Arg363. N-linked (GlcNAc...) asparagine glycosylation is present at Asn357. Residues Ala364–Gly384 form a helical membrane-spanning segment. The Cytoplasmic segment spans residues Pro385–Ala404. The chain crosses the membrane as a helical span at residues Ala405–Ile425. Residues Ser426–Lys432 lie on the Extracellular side of the membrane. A helical membrane pass occupies residues Leu433 to Lys453. Topologically, residues Glu454–Val557 are cytoplasmic. A compositionally biased stretch (basic and acidic residues) spans Lys492–Glu514. Residues Lys492–Val557 are disordered. The segment covering Ser524–Ala536 has biased composition (low complexity). Residues Asn547–Val557 show a composition bias toward basic and acidic residues.

Belongs to the major facilitator superfamily. Sugar transporter (TC 2.A.1.1) family.

It localises to the membrane. The polypeptide is High-affinity hexose transporter ght4 (ght4) (Schizosaccharomyces pombe (strain 972 / ATCC 24843) (Fission yeast)).